Here is a 374-residue protein sequence, read N- to C-terminus: UPF0754 membrane protein SAS1767 (374 aa).

The next 2 helical transmembrane spans lie at 4–24 (LFII…TNVI) and 354–374 (SLGF…AIFV).

Belongs to the UPF0754 family.

The protein resides in the cell membrane. This chain is UPF0754 membrane protein SAS1767, found in Staphylococcus aureus (strain MSSA476).